A 213-amino-acid polypeptide reads, in one-letter code: Large ribosomal subunit protein uL1 (213 aa).

Belongs to the universal ribosomal protein uL1 family. Part of the 50S ribosomal subunit.

In terms of biological role, binds directly to 23S rRNA. Probably involved in E site tRNA release. Protein L1 is also a translational repressor protein, it controls the translation of its operon by binding to its mRNA. The chain is Large ribosomal subunit protein uL1 from Methanococcus maripaludis (strain DSM 14266 / JCM 13030 / NBRC 101832 / S2 / LL).